A 504-amino-acid polypeptide reads, in one-letter code: Serine O-succinyltransferase (504 aa).

Residues M1–L26 constitute a mitochondrion transit peptide. The interval Q49 to P70 is disordered. The span at P57–P70 shows a compositional bias: low complexity. In terms of domain architecture, AB hydrolase-1 spans N117–E395. Residues G124 to A127 form an important for substrate specificity region. The active-site Nucleophile is the S221. R290 serves as a coordination point for substrate. Catalysis depends on residues D443 and H480. D481 provides a ligand contact to substrate.

Belongs to the AB hydrolase superfamily. MetX family.

Its subcellular location is the mitochondrion. The enzyme catalyses succinyl-CoA + L-serine = O-succinyl-L-serine + CoA. It participates in amino-acid biosynthesis; L-cysteine biosynthesis; L-cysteine from L-serine: step 1/2. Functionally, transfers a succinyl group from succinyl-CoA to L-serine, forming succinyl-L-serine. Also has weak serine acetyl transferase activity and homoserine succinyl transferase activity. The polypeptide is Serine O-succinyltransferase (Schizosaccharomyces pombe (strain 972 / ATCC 24843) (Fission yeast)).